A 217-amino-acid polypeptide reads, in one-letter code: Small ribosomal subunit protein uS3 (217 aa).

A KH type-2 domain is found at 38 to 106 (IRKFIDNELK…KVHINVIEIK (69 aa)).

It belongs to the universal ribosomal protein uS3 family. In terms of assembly, part of the 30S ribosomal subunit. Forms a tight complex with proteins S10 and S14.

Its function is as follows. Binds the lower part of the 30S subunit head. Binds mRNA in the 70S ribosome, positioning it for translation. In Staphylococcus haemolyticus (strain JCSC1435), this protein is Small ribosomal subunit protein uS3.